The sequence spans 249 residues: NH(3)-dependent NAD(+) synthetase (249 aa).

Residue 29–36 (GVSGGVDS) coordinates ATP. D35 contributes to the Mg(2+) binding site. Deamido-NAD(+) is bound at residue R116. T136 contributes to the ATP binding site. E141 contributes to the Mg(2+) binding site. Deamido-NAD(+) is bound by residues K149 and D156. ATP contacts are provided by K165 and S187. Position 233–234 (233–234 (HK)) interacts with deamido-NAD(+).

The protein belongs to the NAD synthetase family. Homodimer.

It carries out the reaction deamido-NAD(+) + NH4(+) + ATP = AMP + diphosphate + NAD(+) + H(+). It participates in cofactor biosynthesis; NAD(+) biosynthesis; NAD(+) from deamido-NAD(+) (ammonia route): step 1/1. Catalyzes the ATP-dependent amidation of deamido-NAD to form NAD. Uses ammonia as a nitrogen source. The sequence is that of NH(3)-dependent NAD(+) synthetase from Syntrophomonas wolfei subsp. wolfei (strain DSM 2245B / Goettingen).